The chain runs to 229 residues: Ribonuclease 3 (229 aa).

In terms of domain architecture, RNase III spans 5-127 (LSRLERKLGH…LIGAIYLDAG (123 aa)). Glutamate 40 provides a ligand contact to Mg(2+). The active site involves aspartate 44. Mg(2+) is bound by residues aspartate 113 and glutamate 116. Residue glutamate 116 is part of the active site. The DRBM domain maps to 154–224 (DPKTRLQEFL…AAAALIALGV (71 aa)).

Belongs to the ribonuclease III family. In terms of assembly, homodimer. It depends on Mg(2+) as a cofactor.

It is found in the cytoplasm. The catalysed reaction is Endonucleolytic cleavage to 5'-phosphomonoester.. In terms of biological role, digests double-stranded RNA. Involved in the processing of primary rRNA transcript to yield the immediate precursors to the large and small rRNAs (23S and 16S). Processes some mRNAs, and tRNAs when they are encoded in the rRNA operon. Processes pre-crRNA and tracrRNA of type II CRISPR loci if present in the organism. The polypeptide is Ribonuclease 3 (Ectopseudomonas mendocina (strain ymp) (Pseudomonas mendocina)).